A 198-amino-acid chain; its full sequence is Methyl-coenzyme M reductase operon protein C (198 aa).

MCR is composed of three subunits: alpha, beta, and gamma. The function of proteins C and D is not known.

The sequence is that of Methyl-coenzyme M reductase operon protein C (mcrC) from Methanococcus vannielii.